A 101-amino-acid chain; its full sequence is Small ribosomal subunit protein uS14 (101 aa).

The disordered stretch occupies residues 1–26; sequence MAKVSSIKKNESRKKKSQSLHNKRSA. Positions 11-26 are enriched in basic residues; it reads ESRKKKSQSLHNKRSA.

The protein belongs to the universal ribosomal protein uS14 family. As to quaternary structure, part of the 30S ribosomal subunit. Contacts proteins S3 and S10.

Binds 16S rRNA, required for the assembly of 30S particles and may also be responsible for determining the conformation of the 16S rRNA at the A site. In Rickettsia felis (strain ATCC VR-1525 / URRWXCal2) (Rickettsia azadi), this protein is Small ribosomal subunit protein uS14.